The sequence spans 90 residues: Probable Fe(2+)-trafficking protein (90 aa).

Belongs to the Fe(2+)-trafficking protein family.

In terms of biological role, could be a mediator in iron transactions between iron acquisition and iron-requiring processes, such as synthesis and/or repair of Fe-S clusters in biosynthetic enzymes. The sequence is that of Probable Fe(2+)-trafficking protein from Ectopseudomonas mendocina (strain ymp) (Pseudomonas mendocina).